The chain runs to 198 residues: Recombination protein RecR (198 aa).

The C4-type zinc finger occupies 57-72; the sequence is CSVCNNITDLDPCHIC. In terms of domain architecture, Toprim spans 80–175; sequence SIICVVQEPR…RVTRIAHGLP (96 aa).

The protein belongs to the RecR family.

Functionally, may play a role in DNA repair. It seems to be involved in an RecBC-independent recombinational process of DNA repair. It may act with RecF and RecO. The sequence is that of Recombination protein RecR from Brevibacillus brevis (strain 47 / JCM 6285 / NBRC 100599).